The sequence spans 502 residues: Protein YdgA (502 aa).

A signal peptide spans 1 to 19 (MNKSLVAVGVIVALGVVWT).

It to E.coli YihF and H.influenzae HI_1236. In terms of assembly, homodimer.

It is found in the cell inner membrane. The polypeptide is Protein YdgA (ydgA) (Escherichia coli (strain K12)).